Reading from the N-terminus, the 107-residue chain is Phosphoribosyl-ATP pyrophosphatase (107 aa).

Belongs to the PRA-PH family.

The protein resides in the cytoplasm. It carries out the reaction 1-(5-phospho-beta-D-ribosyl)-ATP + H2O = 1-(5-phospho-beta-D-ribosyl)-5'-AMP + diphosphate + H(+). Its pathway is amino-acid biosynthesis; L-histidine biosynthesis; L-histidine from 5-phospho-alpha-D-ribose 1-diphosphate: step 2/9. The polypeptide is Phosphoribosyl-ATP pyrophosphatase (Nitrobacter hamburgensis (strain DSM 10229 / NCIMB 13809 / X14)).